The chain runs to 334 residues: UDP-N-acetylenolpyruvoylglucosamine reductase (334 aa).

One can recognise an FAD-binding PCMH-type domain in the interval 16 to 186 (INVFAKKIII…LSVGIKLPKT (171 aa)). Arginine 162 is a catalytic residue. Residue serine 232 is the Proton donor of the active site. Residue glutamate 329 is part of the active site.

The protein belongs to the MurB family. It depends on FAD as a cofactor.

It is found in the cytoplasm. It catalyses the reaction UDP-N-acetyl-alpha-D-muramate + NADP(+) = UDP-N-acetyl-3-O-(1-carboxyvinyl)-alpha-D-glucosamine + NADPH + H(+). It participates in cell wall biogenesis; peptidoglycan biosynthesis. Functionally, cell wall formation. The polypeptide is UDP-N-acetylenolpyruvoylglucosamine reductase (Buchnera aphidicola subsp. Baizongia pistaciae (strain Bp)).